A 458-amino-acid polypeptide reads, in one-letter code: MAGHQPILTVSEVTRHLKRTIEDDPLLQDVWMRGEISNFKHHSRGHMYFTLKDEHAKMSAVMFAGNNRFLNFKPENGMKVIVRGEVNVYEPFGQYQLYALEMQPDGIGNLYLAYEQLKERLEQEGLFKEENKKPLPPVARQIAIVTSPTGAAIRDIASTIKRRFPVAQLTLLPVLVQGEEAPHSIAKAIRQANEVGGFDLLIVGRGGGSIEELWAFNEELVARAIYQSVIPIISAVGHETDYTIADFVADVRAATPTGAAELAVPDLKELISRVNQYTERLKRAQHELLKRQKEHLQRLQKSYAFRYPAQLVKQKELELDQQLERLTKHQRRMVSDAKDRLSQLEYRLKRIHPEGRLRQAEQARVKLEVLLKKEFQQMMERKEQQFQQAISSLNLLSPLRVMERGYALPYKAKTQELIKSVKQVRMNDRLHLRVTDGQLICDVKEIESESGGEGYDQK.

It belongs to the XseA family. As to quaternary structure, heterooligomer composed of large and small subunits.

It is found in the cytoplasm. It carries out the reaction Exonucleolytic cleavage in either 5'- to 3'- or 3'- to 5'-direction to yield nucleoside 5'-phosphates.. Its function is as follows. Bidirectionally degrades single-stranded DNA into large acid-insoluble oligonucleotides, which are then degraded further into small acid-soluble oligonucleotides. The polypeptide is Exodeoxyribonuclease 7 large subunit (Halalkalibacterium halodurans (strain ATCC BAA-125 / DSM 18197 / FERM 7344 / JCM 9153 / C-125) (Bacillus halodurans)).